Consider the following 382-residue polypeptide: 1-deoxy-D-xylulose 5-phosphate reductoisomerase (382 aa).

Residues Thr10, Gly11, Ser12, Ile13, Asn38, and Asn120 each coordinate NADPH. Lys121 provides a ligand contact to 1-deoxy-D-xylulose 5-phosphate. Glu122 is an NADPH binding site. Asp146 lines the Mn(2+) pocket. The 1-deoxy-D-xylulose 5-phosphate site is built by Ser147, Glu148, Ser172, and His195. Glu148 is a binding site for Mn(2+). Residue Gly201 participates in NADPH binding. Residues Ser208, Asn213, Lys214, and Glu217 each coordinate 1-deoxy-D-xylulose 5-phosphate. Glu217 contributes to the Mn(2+) binding site.

Belongs to the DXR family. Mg(2+) serves as cofactor. Mn(2+) is required as a cofactor.

The enzyme catalyses 2-C-methyl-D-erythritol 4-phosphate + NADP(+) = 1-deoxy-D-xylulose 5-phosphate + NADPH + H(+). Its pathway is isoprenoid biosynthesis; isopentenyl diphosphate biosynthesis via DXP pathway; isopentenyl diphosphate from 1-deoxy-D-xylulose 5-phosphate: step 1/6. Catalyzes the NADPH-dependent rearrangement and reduction of 1-deoxy-D-xylulose-5-phosphate (DXP) to 2-C-methyl-D-erythritol 4-phosphate (MEP). The chain is 1-deoxy-D-xylulose 5-phosphate reductoisomerase from Caldanaerobacter subterraneus subsp. tengcongensis (strain DSM 15242 / JCM 11007 / NBRC 100824 / MB4) (Thermoanaerobacter tengcongensis).